Reading from the N-terminus, the 180-residue chain is Lysine-specific demethylase 5C (180 aa).

A disordered region spans residues Pro116–Gly159. Ser148 carries the phosphoserine modification.

Belongs to the JARID1 histone demethylase family. Part of two distinct complexes, one containing E2F6, and the other containing REST. Interacts with ZMYND8. Fe(2+) serves as cofactor.

The protein localises to the nucleus. The catalysed reaction is N(6),N(6),N(6)-trimethyl-L-lysyl(4)-[histone H3] + 3 2-oxoglutarate + 3 O2 = L-lysyl(4)-[histone H3] + 3 formaldehyde + 3 succinate + 3 CO2. In terms of biological role, histone demethylase that specifically demethylates 'Lys-4' of histone H3, thereby playing a central role in histone code. Does not demethylate histone H3 'Lys-9', H3 'Lys-27', H3 'Lys-36', H3 'Lys-79' or H4 'Lys-20'. Demethylates trimethylated and dimethylated but not monomethylated H3 'Lys-4'. Participates in transcriptional repression of neuronal genes by recruiting histone deacetylases and REST at neuron-restrictive silencer elements. Represses the CLOCK-BMAL1 heterodimer-mediated transcriptional activation of the core clock component PER2. This Cricetulus griseus (Chinese hamster) protein is Lysine-specific demethylase 5C (KDM5C).